A 118-amino-acid chain; its full sequence is MSAQAKPRSEMTAEELAAKEDEEFNVGPLSILTNSVKNNHQVLINCRNNKKLLGRVKAFDRHCNMVLENVKEMWTEVPKTGKGKKKAKSVAKDRFISKMFLRGDSVILVVKNPLAQAE.

A Sm domain is found at Leu29–Ala115.

The protein belongs to the snRNP core protein family.

The protein resides in the nucleus. It localises to the cytoplasm. It is found in the cytosol. Functionally, plays a role in pre-mRNA splicing as a core component of the spliceosomal U1, U2, U4 and U5 small nuclear ribonucleoproteins (snRNPs), the building blocks of the spliceosome. The sequence is that of Probable small nuclear ribonucleoprotein Sm D2 (snr-4) from Caenorhabditis elegans.